A 475-amino-acid polypeptide reads, in one-letter code: Aspartyl/glutamyl-tRNA(Asn/Gln) amidotransferase subunit B (475 aa).

It belongs to the GatB/GatE family. GatB subfamily. Heterotrimer of A, B and C subunits.

It catalyses the reaction L-glutamyl-tRNA(Gln) + L-glutamine + ATP + H2O = L-glutaminyl-tRNA(Gln) + L-glutamate + ADP + phosphate + H(+). It carries out the reaction L-aspartyl-tRNA(Asn) + L-glutamine + ATP + H2O = L-asparaginyl-tRNA(Asn) + L-glutamate + ADP + phosphate + 2 H(+). Its function is as follows. Allows the formation of correctly charged Asn-tRNA(Asn) or Gln-tRNA(Gln) through the transamidation of misacylated Asp-tRNA(Asn) or Glu-tRNA(Gln) in organisms which lack either or both of asparaginyl-tRNA or glutaminyl-tRNA synthetases. The reaction takes place in the presence of glutamine and ATP through an activated phospho-Asp-tRNA(Asn) or phospho-Glu-tRNA(Gln). This chain is Aspartyl/glutamyl-tRNA(Asn/Gln) amidotransferase subunit B, found in Bacillus cereus (strain G9842).